The sequence spans 259 residues: Thiazole synthase (259 aa).

Catalysis depends on lysine 98, which acts as the Schiff-base intermediate with DXP. 1-deoxy-D-xylulose 5-phosphate-binding positions include glycine 159, 185–186 (AG), and 207–208 (NS).

The protein belongs to the ThiG family. In terms of assembly, homotetramer. Forms heterodimers with either ThiH or ThiS.

Its subcellular location is the cytoplasm. The enzyme catalyses [ThiS sulfur-carrier protein]-C-terminal-Gly-aminoethanethioate + 2-iminoacetate + 1-deoxy-D-xylulose 5-phosphate = [ThiS sulfur-carrier protein]-C-terminal Gly-Gly + 2-[(2R,5Z)-2-carboxy-4-methylthiazol-5(2H)-ylidene]ethyl phosphate + 2 H2O + H(+). It participates in cofactor biosynthesis; thiamine diphosphate biosynthesis. Functionally, catalyzes the rearrangement of 1-deoxy-D-xylulose 5-phosphate (DXP) to produce the thiazole phosphate moiety of thiamine. Sulfur is provided by the thiocarboxylate moiety of the carrier protein ThiS. In vitro, sulfur can be provided by H(2)S. The polypeptide is Thiazole synthase (Chlorobaculum tepidum (strain ATCC 49652 / DSM 12025 / NBRC 103806 / TLS) (Chlorobium tepidum)).